The sequence spans 98 residues: uncharacterized protein (98 aa).

This sequence belongs to the YciI family. As to quaternary structure, homodimer.

This is an uncharacterized protein from Haemophilus influenzae (strain ATCC 51907 / DSM 11121 / KW20 / Rd).